Here is a 518-residue protein sequence, read N- to C-terminus: Arginyl-tRNA--protein transferase 1 (518 aa).

A compositionally biased stretch (basic and acidic residues) spans 149 to 165; it reads ESLQSEGKNSKKEEPHE. The disordered stretch occupies residues 149–207; sequence ESLQSEGKNSKKEEPHELLQSQDSVGEKLGSGEPSHSVKVHTVPKPGKGADLSKPPCRK. Ser-169 carries the post-translational modification Phosphoserine.

It belongs to the R-transferase family. As to quaternary structure, monomer. Interacts with LIAT1; LIAT1 is not a substrate of ATE1, the interaction takes place in the cytoplasm and seems to increase ATE1 arginyltransferase activity.

The protein resides in the nucleus. Its subcellular location is the cytoplasm. It catalyses the reaction an N-terminal L-alpha-aminoacyl-[protein] + L-arginyl-tRNA(Arg) = an N-terminal L-arginyl-L-aminoacyl-[protein] + tRNA(Arg) + H(+). Its function is as follows. Involved in the post-translational conjugation of arginine to the N-terminal aspartate or glutamate of a protein. This arginylation is required for degradation of the protein via the ubiquitin pathway. Does not arginylate cysteine residues. This chain is Arginyl-tRNA--protein transferase 1 (ATE1), found in Macaca fascicularis (Crab-eating macaque).